A 335-amino-acid polypeptide reads, in one-letter code: uncharacterized protein (335 aa).

The N-terminal stretch at 1-21 is a signal peptide; the sequence is MDKKARAHTVIVCLVGALSLA. Cys22 is lipidated: N-palmitoyl cysteine. Cys22 carries S-diacylglycerol cysteine lipidation.

The protein localises to the cell membrane. This is an uncharacterized protein from Treponema pallidum (strain Nichols).